We begin with the raw amino-acid sequence, 190 residues long: Putative cyclic ADP-D-ribose synthase ThsB (190 aa).

This sequence belongs to the Thoeris B TIR-like family. Homodimer.

The protein localises to the cytoplasm. Its activity is regulated as follows. Activated upon phage infection. Its function is as follows. TIR-like domain-containing component of the Thoeris antiviral defense system, composed of ThsA and ThsB. Expression of ThsA and ThsB in B.subtilis (strain BEST7003) confers resistance to phages SBSphiC, SBSphiJ and SPO1. Phage infection activates this protein, generating a signal molecule that in turn activates ThsA. Probably hydrolyzes NAD(+) to make a cyclic ADP-D-ribose (cADPR) signaling molecule; might make 3'cADPR. In Bacillus amyloliquefaciens (strain Y2) (Bacillus amyloliquefaciens subsp. plantarum (strain B9601-Y2)), this protein is Putative cyclic ADP-D-ribose synthase ThsB.